We begin with the raw amino-acid sequence, 161 residues long: MIKYTIDELFQLKPSVTLEVNFDAVEFRAIIEKVKQLQHLKEEEFNSHHVGHFGRRRSSHHHGRPKIKHNKPKVTTDSDGWCTFEAKKKGSGEDDEEETETTPTSTVPVATIAQETLKVKPNNKNISSNRPADTRDIVADKPILGFNAFAALESEDEDDEA.

Over residues 52-72 the composition is skewed to basic residues; that stretch reads HFGRRRSSHHHGRPKIKHNKP. Residues 52 to 108 form a disordered region; sequence HFGRRRSSHHHGRPKIKHNKPKVTTDSDGWCTFEAKKKGSGEDDEEETETTPTSTVP. Residues Ser78 and Ser91 each carry the phosphoserine modification. 3 positions are modified to phosphothreonine: Thr99, Thr101, and Thr102. Ser154 carries the post-translational modification Phosphoserine.

The protein belongs to the CAF20 family. As to quaternary structure, interacts with TIF45. In terms of processing, phosphorylated by casein kinase II complex (CK2).

Its subcellular location is the cytoplasm. In terms of biological role, acts as an inhibitor of cap-dependent translation. Competes with eIF4G1/TIF4631 and EAP1 for binding to eIF4E/TIF45 and interferes with the formation of the eIF4F complex, inhibiting translation and stabilizing mRNA. Binding affinity for eIF4E/TIF45 is 10-fold less than that of eIF4G1/TIF4631. Required for induction of pseudohyphal growth in response to nitrogen limitation, probably by regulating STE12 translation. The protein is Cap-associated protein CAF20 (CAF20) of Saccharomyces cerevisiae (strain YJM789) (Baker's yeast).